Here is a 422-residue protein sequence, read N- to C-terminus: L-threonine dehydratase biosynthetic IlvA (422 aa).

K56 is subject to N6-(pyridoxal phosphate)lysine. Pyridoxal 5'-phosphate is bound by residues N83, 189 to 193, and S315; that span reads GGGGL. An ACT-like domain is found at 339–413; the sequence is HYFILNFPQR…FDPSNIYINE (75 aa).

The protein belongs to the serine/threonine dehydratase family. As to quaternary structure, homotetramer. Pyridoxal 5'-phosphate serves as cofactor.

It catalyses the reaction L-threonine = 2-oxobutanoate + NH4(+). It functions in the pathway amino-acid biosynthesis; L-isoleucine biosynthesis; 2-oxobutanoate from L-threonine: step 1/1. Its function is as follows. Catalyzes the anaerobic formation of alpha-ketobutyrate and ammonia from threonine in a two-step reaction. The first step involved a dehydration of threonine and a production of enamine intermediates (aminocrotonate), which tautomerizes to its imine form (iminobutyrate). Both intermediates are unstable and short-lived. The second step is the nonenzymatic hydrolysis of the enamine/imine intermediates to form 2-ketobutyrate and free ammonia. In the low water environment of the cell, the second step is accelerated by RidA. The chain is L-threonine dehydratase biosynthetic IlvA (ilvA) from Staphylococcus aureus (strain NCTC 8325 / PS 47).